A 129-amino-acid polypeptide reads, in one-letter code: Transcription antitermination protein NusB (129 aa).

It belongs to the NusB family.

In terms of biological role, involved in transcription antitermination. Required for transcription of ribosomal RNA (rRNA) genes. Binds specifically to the boxA antiterminator sequence of the ribosomal RNA (rrn) operons. This chain is Transcription antitermination protein NusB, found in Bacillus licheniformis (strain ATCC 14580 / DSM 13 / JCM 2505 / CCUG 7422 / NBRC 12200 / NCIMB 9375 / NCTC 10341 / NRRL NRS-1264 / Gibson 46).